The primary structure comprises 85 residues: Large ribosomal subunit protein bL31B (85 aa).

This sequence belongs to the bacterial ribosomal protein bL31 family. Type B subfamily. In terms of assembly, part of the 50S ribosomal subunit.

The polypeptide is Large ribosomal subunit protein bL31B (Staphylococcus haemolyticus (strain JCSC1435)).